A 1199-amino-acid chain; its full sequence is Tubulin-specific chaperone D (1199 aa).

Disordered regions lie at residues 1–23 and 337–361; these read MALS…VEDA and QHSI…QDDV. The span at 14 to 23 shows a compositional bias: acidic residues; that stretch reads DPVEDPVEDA. 4 HEAT repeats span residues 368-406, 603-639, 757-793, and 1111-1147; these read VIEQ…ADDV, EHTA…ARSL, AAAQ…PAFF, and GDVR…VLTY.

Belongs to the TBCD family. As to quaternary structure, found in a complex with at least ARL2, PPP2CB, PPP2R1A, PPP2R2A, PPP2R5E and TBCD. Interacts with PPP2CB. Part of a supercomplex made of cofactors A to E. Cofactors A and D function by capturing and stabilizing tubulin in a quasi-native conformation. Cofactor E binds to the cofactor D-tubulin complex; interaction with cofactor C then causes the release of tubulin polypeptides that are committed to the native state. Interacts with ARL2; interaction is enhanced with the GDP-bound form of ARL2. Does not interact with ARL3, ARL4A and ARL4D. Interacts with beta tubulin. Interacts with TBCE.

It localises to the cell junction. It is found in the tight junction. Its subcellular location is the lateral cell membrane. The protein resides in the cytoplasm. The protein localises to the adherens junction. It localises to the cytoskeleton. It is found in the microtubule organizing center. Its subcellular location is the centrosome. In terms of biological role, tubulin-folding protein implicated in the first step of the tubulin folding pathway and required for tubulin complex assembly. Involved in the regulation of microtubule polymerization or depolymerization, it modulates microtubule dynamics by capturing GTP-bound beta-tubulin (TUBB). Its ability to interact with beta tubulin is regulated via its interaction with ARL2. Acts as a GTPase-activating protein (GAP) for ARL2. Induces microtubule disruption in absence of ARL2. Increases degradation of beta tubulin, when overexpressed in polarized cells. Promotes epithelial cell detachment, a process antagonized by ARL2. Induces tight adherens and tight junctions disassembly at the lateral cell membrane. Required for correct assembly and maintenance of the mitotic spindle, and proper progression of mitosis. Involved in neuron morphogenesis. In Bos taurus (Bovine), this protein is Tubulin-specific chaperone D (TBCD).